The chain runs to 509 residues: Coiled-coil domain-containing protein 181 (509 aa).

Disordered stretches follow at residues 27-122 (INDK…EDEE) and 287-368 (LAQV…NEKK). 2 stretches are compositionally biased toward basic and acidic residues: residues 41-58 (ACKK…KETE) and 67-82 (DPDK…RRND). The segment covering 319 to 333 (RIQSAGVSPVTSTYC) has biased composition (polar residues). Coiled-coil stretches lie at residues 335-377 (SPRQ…VFKA) and 418-488 (LKKK…RSKQ). Basic and acidic residues predominate over residues 337-368 (RQKELQKQLERKRERLKREEEQRKLEEENEKK).

This sequence belongs to the CCDC181 family. In terms of assembly, homodimer. Interacts with HOOK1. Interacts with HOOK2. Interacts with HOOK3.

The protein localises to the cytoplasm. It localises to the cytoskeleton. It is found in the cell projection. Its subcellular location is the cilium. The protein resides in the flagellum. Microtubule-binding protein that localizes to the microtubular manchette of elongating spermatids. This is Coiled-coil domain-containing protein 181 from Rattus norvegicus (Rat).